A 356-amino-acid chain; its full sequence is Histidinol-phosphate aminotransferase (356 aa).

Lys214 bears the N6-(pyridoxal phosphate)lysine mark.

This sequence belongs to the class-II pyridoxal-phosphate-dependent aminotransferase family. Histidinol-phosphate aminotransferase subfamily. Homodimer. Pyridoxal 5'-phosphate serves as cofactor.

It catalyses the reaction L-histidinol phosphate + 2-oxoglutarate = 3-(imidazol-4-yl)-2-oxopropyl phosphate + L-glutamate. The protein operates within amino-acid biosynthesis; L-histidine biosynthesis; L-histidine from 5-phospho-alpha-D-ribose 1-diphosphate: step 7/9. This Shigella boydii serotype 4 (strain Sb227) protein is Histidinol-phosphate aminotransferase.